A 155-amino-acid chain; its full sequence is MRTFEGSFCGKDLKFAIVISRFNSFITDELLKGCLDGLKRHEVDSENIDVYYVPGAFEIPLVCKKLAKSKKYNAIIALGAVIRGSTPHFEYVSAEVSKGIANVSLEQEVPVIFGVLTCDTVDQAIERAGTKAGNKGFDAAMSALEMANLMKNISS.

5-amino-6-(D-ribitylamino)uracil is bound by residues F22, 56 to 58, and 80 to 82; these read AFE and AVI. 85–86 provides a ligand contact to (2S)-2-hydroxy-3-oxobutyl phosphate; sequence ST. The Proton donor role is filled by H88. F113 provides a ligand contact to 5-amino-6-(D-ribitylamino)uracil. A (2S)-2-hydroxy-3-oxobutyl phosphate-binding site is contributed by R127.

This sequence belongs to the DMRL synthase family.

It carries out the reaction (2S)-2-hydroxy-3-oxobutyl phosphate + 5-amino-6-(D-ribitylamino)uracil = 6,7-dimethyl-8-(1-D-ribityl)lumazine + phosphate + 2 H2O + H(+). It participates in cofactor biosynthesis; riboflavin biosynthesis; riboflavin from 2-hydroxy-3-oxobutyl phosphate and 5-amino-6-(D-ribitylamino)uracil: step 1/2. Catalyzes the formation of 6,7-dimethyl-8-ribityllumazine by condensation of 5-amino-6-(D-ribitylamino)uracil with 3,4-dihydroxy-2-butanone 4-phosphate. This is the penultimate step in the biosynthesis of riboflavin. This is 6,7-dimethyl-8-ribityllumazine synthase from Caldicellulosiruptor bescii (strain ATCC BAA-1888 / DSM 6725 / KCTC 15123 / Z-1320) (Anaerocellum thermophilum).